The following is a 212-amino-acid chain: Large ribosomal subunit protein uL3 (212 aa).

Residue glutamine 153 is modified to N5-methylglutamine.

This sequence belongs to the universal ribosomal protein uL3 family. In terms of assembly, part of the 50S ribosomal subunit. Forms a cluster with proteins L14 and L19. In terms of processing, methylated by PrmB.

Functionally, one of the primary rRNA binding proteins, it binds directly near the 3'-end of the 23S rRNA, where it nucleates assembly of the 50S subunit. The polypeptide is Large ribosomal subunit protein uL3 (Shewanella loihica (strain ATCC BAA-1088 / PV-4)).